We begin with the raw amino-acid sequence, 507 residues long: Cell cycle serine/threonine-protein kinase hsk1 (507 aa).

Position 22 is a phosphoserine (serine 22). The region spanning 68–433 (YRLIEKIGEG…AEEALDHDFL (366 aa)) is the Protein kinase domain. Residues 74–82 (IGEGTFSSV) and lysine 129 each bind ATP. Aspartate 216 acts as the Proton acceptor in catalysis. Residue threonine 291 is modified to Phosphothreonine. The disordered stretch occupies residues 475–507 (FKEQEETDEPTSLSKRKRSIDEILPNDALQDGA). Serine 493 carries the post-translational modification Phosphoserine.

This sequence belongs to the protein kinase superfamily. Ser/Thr protein kinase family. CDC7 subfamily. As to quaternary structure, heterodimer with the regulatory subunit him1/dfp1. May form homooligomeric complexes. Interacts with mcm10. Post-translationally, autophosphorylated. Phosphorylated by cds1 in vitro.

The protein resides in the nucleus. The catalysed reaction is L-seryl-[protein] + ATP = O-phospho-L-seryl-[protein] + ADP + H(+). It carries out the reaction L-threonyl-[protein] + ATP = O-phospho-L-threonyl-[protein] + ADP + H(+). With respect to regulation, phosphorylation of exogenous substrates activated by Dfp1. Functionally, required for G1/S transition. Plays a role in DNA replication checkpoint signaling through regulating rad3 and cds1. Involved in the maintenance of mitotic chromosome structures during S phase through regulating the function of rad21. Required for initiation of mitotic DNA replication through phosphorylating mcm2/cdc19. Required for genome integrity. The polypeptide is Cell cycle serine/threonine-protein kinase hsk1 (hsk1) (Schizosaccharomyces pombe (strain 972 / ATCC 24843) (Fission yeast)).